The sequence spans 240 residues: Protein OPG176 (240 aa).

Belongs to the orthopoxvirus OPG176 family. In terms of assembly, tetramer. Interacts with host MYD88, TRF4, TICAM2 and MAL.

Functionally, BCL2-like protein which disrupts the host immune response by inhibiting the TLR4 signaling pathway leading to NF-kappa-B activation. Acts close to the plasma membrane and targets several host TIR-domain containing adapter proteins including MYD88, TIRAP, TRIF and TICAM2. In turn, blocks the host NF-kappa-B and TRIF-mediated IRF3 activation. The chain is Protein OPG176 (OPG176) from Cynomys gunnisoni (Gunnison's prairie dog).